A 301-amino-acid chain; its full sequence is tRNA (guanine-N(7)-)-methyltransferase (301 aa).

A disordered region spans residues 1–26; that stretch reads MSETPDSPRPVTPGSQASFGTYGGRP. Residues glutamate 85, glutamate 110, asparagine 137, and aspartate 160 each coordinate S-adenosyl-L-methionine. Aspartate 160 is an active-site residue. Residues lysine 164 and aspartate 196 each coordinate substrate. The disordered stretch occupies residues 244–270; that stretch reads APVREGRAPVSTEHTGPNEGVDEEGGW. 280 to 283 is a substrate binding site; that stretch reads TSFE.

Belongs to the class I-like SAM-binding methyltransferase superfamily. TrmB family.

It carries out the reaction guanosine(46) in tRNA + S-adenosyl-L-methionine = N(7)-methylguanosine(46) in tRNA + S-adenosyl-L-homocysteine. It functions in the pathway tRNA modification; N(7)-methylguanine-tRNA biosynthesis. Functionally, catalyzes the formation of N(7)-methylguanine at position 46 (m7G46) in tRNA. The protein is tRNA (guanine-N(7)-)-methyltransferase of Paenarthrobacter aurescens (strain TC1).